The sequence spans 1446 residues: E3 ubiquitin-protein ligase listerin (1446 aa).

11 HEAT repeats span residues 71–108, 115–153, 324–361, 363–399, 413–450, 630–669, 684–721, 1046–1083, 1107–1144, 1165–1202, and 1251–1289; these read QTRE…LTTD, MLTM…VTNG, SLQK…LLQK, ENPA…TFSD, EILK…WIIE, AENV…AEDE, GDFE…FCDA, LRAL…PAFQ, SVAR…KLSL, LLDL…NALN, and FKSM…RLLI. The segment at 1395-1442 adopts an RING-type zinc-finger fold; sequence CTICMMTVHQQTHQLPKIKCKQCKNKFHSNCLYKWFESSNQSTCPLCR.

Belongs to the LTN1 family. In terms of assembly, component of the ribosome quality control complex (RQC), composed of at least the E3 ubiquitin ligase ltn1 and nemf. The complex probably also contains tcf25 as well as vcp/p97 and its ubiquitin-binding cofactors. RQC forms a stable complex with 60S ribosomal subunits.

It is found in the cytoplasm. The protein resides in the cytosol. It carries out the reaction S-ubiquitinyl-[E2 ubiquitin-conjugating enzyme]-L-cysteine + [acceptor protein]-L-lysine = [E2 ubiquitin-conjugating enzyme]-L-cysteine + N(6)-ubiquitinyl-[acceptor protein]-L-lysine.. Its pathway is protein modification; protein ubiquitination. In terms of biological role, E3 ubiquitin-protein ligase. Component of the ribosome quality control complex (RQC), a ribosome-associated complex that mediates ubiquitination and extraction of incompletely synthesized nascent chains for proteasomal degradation. Ubiquitination leads to vcp/p97 recruitment for extraction and degradation of the incomplete translation product. The polypeptide is E3 ubiquitin-protein ligase listerin (Caenorhabditis elegans).